A 449-amino-acid chain; its full sequence is C4-dicarboxylate transport protein (449 aa).

The next 8 helical transmembrane spans lie at 18-38 (PFYL…ALLG), 61-81 (MIIS…VAHV), 93-113 (VYFL…AHVV), 159-179 (FVGD…IALA), 202-222 (LVQM…AFTI), 244-264 (SLLF…FSIL), 311-331 (GYSF…LFIA), and 369-389 (AATL…ILGV).

This sequence belongs to the dicarboxylate/amino acid:cation symporter (DAACS) (TC 2.A.23) family.

It localises to the cell inner membrane. Functionally, responsible for the transport of dicarboxylates such as succinate, fumarate, and malate from the periplasm across the membrane. This Xylella fastidiosa (strain M12) protein is C4-dicarboxylate transport protein.